The chain runs to 45 residues: Iota-conotoxin-like R11.13 (45 aa).

4 disulfides stabilise this stretch: C5-C19, C12-C22, C18-C27, and C21-C36. Residue L43 is modified to D-leucine. Position 45 (R45) is a propeptide, removed by a carboxypeptidase.

This sequence belongs to the conotoxin I1 superfamily. Expressed by the venom duct.

The protein resides in the secreted. Its function is as follows. Iota-conotoxins bind to voltage-gated sodium channels (Nav) and act as agonists by shifting the voltage-dependence of activation to more hyperpolarized levels. Produces general excitatory symptoms. In Conus radiatus (Rayed cone), this protein is Iota-conotoxin-like R11.13.